The chain runs to 2019 residues: MSSWVALNIEPDEAIEEEVDDTKEIQIEEALKLYQNALKLHSQGPQFYAQAAEAYEALLSSDIFKYPESISDFKRSALQDSEAHLDDDVAVIDAVETFPEFSVNDSTSSTLLQTIYLSYKNHGQFTLDTLQAFLQENPRTSDKAQEILSQVSKRTHAALASFAEALERDDTDLNLWRRSARLSNALQSYRLVRYCLESVLADDENCLEVRTDQLGLDETFAQGQLRETLQALDDNLSVSQVPLKKPKKALLRFLERQKDPYPYLPALPSHVRDEDPSKNPLAIRASCYQLTPASHTWAAVGDSILQALIDMERDASKFGPGTSIRFSMPESTADLRSSTAGEVADQDQSSHMENGESANHIPEEDVDIANTTESAAPKTLRKDQDASSILEHVDDQSSIDQRAEKQLMESLENQSARQNDATTVQDVPNVDEVEPNPSSAGRKRPSASAANEDYQAEPVRTKSRRTRLRDSIAETSLQSDEVSFDQNKYYEDRLQTYVEADEWMFDTVGPLLSKLGVDKLESLDELRRQSAANCSKSSVERSSNQPTSAVHVLYRDLDSIVKTWDEAKSQAMLQDDTSLTFQDMKAMDNSGLTIFLEHSRKSARKTGLKPSFTDDKVLSKFLKGVNEEWLHLHEVGFAWLKLLLMPVYGKSPVRKNSRSKKWPVMESAYVAFQWPDVLKEKVVQLLVRDDEYIFRKMREQAEQTELQILNHTPQTPFKYTRDHLAYLEMTQTVFEIHLDVYASINNPHSEVDQDTRLVQRDRLMRWSMLARTALSHYLDHGPSRKDSQNSIILRHIWASTFHSNMEPDVHREHILLCLQDLKEMLHRLSILEIHLMNNAMMPELSADAIDQEISKLNSMDFFMKIFTPGSEDPVELIETIEPIVEPSSVEIPEESESNDQSLSQSMVQLKEMRSFLDRGDAMLKLFLWQRLRDAYQAIDYPPKVVSCYLRSVETIIQELLGASYLEESNEHREIALIRWLKSLDRILMKLVTLVLQQSDKAYECLDMEHLRSSMSALTTLTNLLHSFALYEDSVRVGQTPSSSVRGSLSKSLGNFTEKLREMEVRCWILQYTLLKEAITQNGDLFESPLEDRILFLRSVHNALGIRKMCKRSNKQFLKLMKAEFFSLESKEAYESEICQILWDLYGINLSPPGRFLFEHECPPEKLDRSTAIKLVDFVLKLAKRMNIKDLSKSELKSTIEKIQQAIGTTKSSPPLTYNKRILSAYLKSPINPTEIFRAVRGVADLPLVPVPTESAVIAQNGWYFLLGHAALTKFRSQKRLNPVPTTDLDEAITFFRQDLDHATGRWESWYRLAQTYDSKLEEDITWSADKINNNRTELVTWQRNAIHCYAMAVATAIRSAEPTPETRATLSELYTDFGIRLYSSSREPLSMAAFSLADFTRHYSNEESQRMYQGKPFKEMRLYSVWNLARYLLKRATIDKPKSWMNHYMLSKCLWKMFSCDDSVRGNAQRISVDDLLDSLLDAIDTLPQRKDSRSDPIFEPHYKLVSIVHKLVDRGTLTPAEGSQTLMATPLARKVQPPEDKAGWKPYILEVLRRLKHADKSNWHHRMAVRAAHVTYDDTRDTVSAAAAKNELTQQIFTKTMTIQVWRPEFERPGRHFVYTTRYVYFFVSLLDQLNDRANLDQLLRRVRKKQGDFINHTKLWEDVCLTYAKVIRRAGSINEGHEENVFKPIGWEEFVANTARLENLPQLAPGSQVLLELLRDAIELKKLNNNLMKVSLLEDLIADLYSRLYEINMPQVLEQANEENKEKMKVDHLLMASDGAADTPTPPNSAPASEAPAPRGRTKGIARRDVQKRAETIVGRKLTPRAPAAKASVPAESEPPATSEPAAPSGNQPNKTSFEMGQQSDIPQSIQDSADDESELSEIDDEKLSKLAAERKLLFPNLRDRISPDPDSEMSVPASIDGDAADEVGDGDADLNEAEGGGETTVEEGEGEDGEEGDEADLERDENDGDEESLEEGEGNGEDTENAQDMEDEAEEPEVIEGDPPKENASEPEPMET.

2 disordered regions span residues 319-467 (GPGT…RRTR) and 1780-2019 (DGAA…PMET). Residues 334-347 (DLRSSTAGEVADQD) are compositionally biased toward polar residues. The span at 380–407 (LRKDQDASSILEHVDDQSSIDQRAEKQL) shows a compositional bias: basic and acidic residues. A compositionally biased stretch (polar residues) spans 411-426 (LENQSARQNDATTVQD). Basic and acidic residues predominate over residues 1808-1817 (ARRDVQKRAE). The segment covering 1826–1851 (PRAPAAKASVPAESEPPATSEPAAPS) has biased composition (low complexity). Positions 1852-1863 (GNQPNKTSFEMG) are enriched in polar residues. The segment covering 1864–1874 (QQSDIPQSIQD) has biased composition (low complexity). A compositionally biased stretch (acidic residues) spans 1875-1887 (SADDESELSEIDD). Over residues 1888–1910 (EKLSKLAAERKLLFPNLRDRISP) the composition is skewed to basic and acidic residues. 2 stretches are compositionally biased toward acidic residues: residues 1925–1939 (DAADEVGDGDADLNE) and 1947–2003 (TVEE…EVIE).

The protein belongs to the HIR3 family.

It is found in the nucleus. In terms of biological role, has a role in a nucleosome assembly pathway that is required for the integrity of heterochromatin and proper chromosome segregation. The polypeptide is Histone transcription regulator 3 homolog (hir3) (Aspergillus fumigatus (strain ATCC MYA-4609 / CBS 101355 / FGSC A1100 / Af293) (Neosartorya fumigata)).